The sequence spans 371 residues: Mitogen-activated protein kinase homolog MMK2 (371 aa).

Residues V37–M323 enclose the Protein kinase domain. Residues V43–V51 and K66 contribute to the ATP site. The active-site Proton acceptor is D163. T195 is subject to Phosphothreonine. Residues T195 to Y197 carry the TXY motif. Y197 is subject to Phosphotyrosine.

It belongs to the protein kinase superfamily. CMGC Ser/Thr protein kinase family. MAP kinase subfamily. Requires Mg(2+) as cofactor. Post-translationally, dually phosphorylated on Thr-195 and Tyr-197, which activates the enzyme. Autophosphorylated.

It carries out the reaction L-seryl-[protein] + ATP = O-phospho-L-seryl-[protein] + ADP + H(+). The enzyme catalyses L-threonyl-[protein] + ATP = O-phospho-L-threonyl-[protein] + ADP + H(+). Activated by tyrosine and threonine phosphorylation. This Medicago sativa (Alfalfa) protein is Mitogen-activated protein kinase homolog MMK2 (MMK2).